A 208-amino-acid chain; its full sequence is Riboflavin synthase (208 aa).

Lumazine-binding repeat units follow at residues 1–97 (MFTG…MGGH) and 98–195 (FVQG…EKLV). 2,4-dihydroxypteridine contacts are provided by residues 4-6 (GLV), 48-50 (CLT), 62-67 (GIAPES), 101-103 (GHV), Lys-137, 146-148 (SLT), and 160-165 (MMISYT).

In terms of assembly, homotrimer.

The catalysed reaction is 2 6,7-dimethyl-8-(1-D-ribityl)lumazine + H(+) = 5-amino-6-(D-ribitylamino)uracil + riboflavin. Its pathway is cofactor biosynthesis; riboflavin biosynthesis; riboflavin from 2-hydroxy-3-oxobutyl phosphate and 5-amino-6-(D-ribitylamino)uracil: step 2/2. Its function is as follows. Catalyzes the dismutation of two molecules of 6,7-dimethyl-8-ribityllumazine, resulting in the formation of riboflavin and 5-amino-6-(D-ribitylamino)uracil. The protein is Riboflavin synthase (rib5) of Schizosaccharomyces pombe (strain 972 / ATCC 24843) (Fission yeast).